The sequence spans 763 residues: Phosphoglycerol transferase I (763 aa).

4 helical membrane-spanning segments follow: residues 1 to 21, 26 to 46, 77 to 97, and 108 to 128; these read MSEL…AWKA, WWFA…ITLF, ILPG…LGWI, and FGYS…SPAF.

This sequence belongs to the OpgB family.

The protein localises to the cell inner membrane. The catalysed reaction is a phosphatidylglycerol + a membrane-derived-oligosaccharide D-glucose = a 1,2-diacyl-sn-glycerol + a membrane-derived-oligosaccharide 6-(glycerophospho)-D-glucose.. It functions in the pathway glycan metabolism; osmoregulated periplasmic glucan (OPG) biosynthesis. Its function is as follows. Transfers a phosphoglycerol residue from phosphatidylglycerol to the membrane-bound nascent glucan backbones. This Escherichia coli O45:K1 (strain S88 / ExPEC) protein is Phosphoglycerol transferase I.